Reading from the N-terminus, the 520-residue chain is Transposase for insertion sequence element IS21-like (520 aa).

Positions 13 to 78 constitute an HTH IS21-type domain; the sequence is YMWYKVRELQ…KYEEYVRGTL (66 aa). An Integrase catalytic domain is found at 136 to 312; sequence LPETPYGEYA…VPSEEFAVEK (177 aa).

The protein belongs to the transposase IS21/IS408/IS1162 family.

In terms of biological role, involved in the transposition of the insertion sequence. In Bacteroides fragilis, this protein is Transposase for insertion sequence element IS21-like (tnpA).